Consider the following 87-residue polypeptide: Small ribosomal subunit protein bS20 (87 aa).

The span at 1–15 (MANTRSAKKMVRKIA) shows a compositional bias: basic residues. 2 disordered regions span residues 1–22 (MANT…DVNK) and 64–87 (KGVT…KAMA).

The protein belongs to the bacterial ribosomal protein bS20 family.

In terms of biological role, binds directly to 16S ribosomal RNA. This chain is Small ribosomal subunit protein bS20, found in Hyphomonas neptunium (strain ATCC 15444).